Here is a 148-residue protein sequence, read N- to C-terminus: Probable DNA-directed RNA polymerases I, II, and III subunit RPABC3 (148 aa).

The tract at residues 16–40 is non-specific ssDNA binding; it reads DPDGKKFDRVSRYFCDAESFKMELI.

It belongs to the eukaryotic RPB8 RNA polymerase subunit family. As to quaternary structure, component of the RNA polymerase I (Pol I), RNA polymerase II (Pol II) and RNA polymerase III (Pol III) complexes consisting of at least 13, 12 and 17 subunits, respectively. Directly interacts with POLR2A.

Its subcellular location is the nucleus. In terms of biological role, DNA-dependent RNA polymerase catalyzes the transcription of DNA into RNA using the four ribonucleoside triphosphates as substrates. Common component of RNA polymerases I, II and III which synthesize ribosomal RNA precursors, mRNA precursors and many functional non-coding RNAs, and small RNAs, such as 5S rRNA and tRNAs, respectively. The polypeptide is Probable DNA-directed RNA polymerases I, II, and III subunit RPABC3 (Caenorhabditis briggsae).